Here is a 172-residue protein sequence, read N- to C-terminus: Protein PLASTID REDOX INSENSITIVE 2, chloroplastic (172 aa).

The N-terminal 54 residues, 1–54, are a transit peptide targeting the chloroplast; it reads MAARLWAAAVAPATLNPPLLTLSASSSPSSSRLRRSVLGRLRSRAPRPADFVCR.

The protein resides in the plastid. It is found in the chloroplast stroma. The protein localises to the chloroplast nucleoid. Required for the activity of the plastid-encoded RNA polymerase (PEP) and full expression of genes transcribed by PEP. The chain is Protein PLASTID REDOX INSENSITIVE 2, chloroplastic from Oryza sativa subsp. japonica (Rice).